The primary structure comprises 467 residues: 3-isopropylmalate dehydratase large subunit (467 aa).

[4Fe-4S] cluster is bound by residues Cys347, Cys407, and Cys410.

It belongs to the aconitase/IPM isomerase family. LeuC type 1 subfamily. As to quaternary structure, heterodimer of LeuC and LeuD. It depends on [4Fe-4S] cluster as a cofactor.

The enzyme catalyses (2R,3S)-3-isopropylmalate = (2S)-2-isopropylmalate. It participates in amino-acid biosynthesis; L-leucine biosynthesis; L-leucine from 3-methyl-2-oxobutanoate: step 2/4. In terms of biological role, catalyzes the isomerization between 2-isopropylmalate and 3-isopropylmalate, via the formation of 2-isopropylmaleate. The protein is 3-isopropylmalate dehydratase large subunit of Gloeothece citriformis (strain PCC 7424) (Cyanothece sp. (strain PCC 7424)).